The following is a 516-amino-acid chain: MSITSPPIEVSVLTDSIKNLLEKNFLRVVVKGELSNVSLQTSGHLYFAIKDSKAVLNGAFFHFRSKYFDRKPKDGDYVILHGKLTVYAPRGQYQIVAYALTFSGEGNLLQQFEERKQRLAAEGYFDPKRKKPLPSGARVIGVITSPTGAVIQDILRVLSRRCHQFQVILYPVTVQGATAAQEISQAIQFFNQNSMGVHALIIARGGGSIEDLWAFNEEELVKSIVASSIPIISAVGHETDFTLCDFASDVRAPTPSAAAEIVCKSSDQYRQELQNLRRYVSSHARQFIAAKKNLLTHWQRHLASVDFYHTAQQTLDYTRAALERGIETKLEYYKQRFAQYRRWLKSDVLIRIEKHLADLNQSLMLSIKNKIYTKKTSLNQLYTSCLKNELLNLQHRTQHSRNILSQLSRRLHIAIASSQQTHQECLVRLQNELSFTIQHLLTKAKERCQAIQEQASSLNPKNVLKRGFAQLFDFNKHFVIISAESLKQSDLVRVCLQDGEAVVSVKEVWLNNDKKG.

The protein belongs to the XseA family. As to quaternary structure, heterooligomer composed of large and small subunits.

It localises to the cytoplasm. It carries out the reaction Exonucleolytic cleavage in either 5'- to 3'- or 3'- to 5'-direction to yield nucleoside 5'-phosphates.. Bidirectionally degrades single-stranded DNA into large acid-insoluble oligonucleotides, which are then degraded further into small acid-soluble oligonucleotides. The protein is Exodeoxyribonuclease 7 large subunit of Chlamydia trachomatis serovar A (strain ATCC VR-571B / DSM 19440 / HAR-13).